Reading from the N-terminus, the 114-residue chain is uncharacterized protein (114 aa).

2 helical membrane passes run 14–34 (VMSA…CFLL) and 75–95 (VIII…HPVA).

It localises to the membrane. This is an uncharacterized protein from Homo sapiens (Human).